A 104-amino-acid polypeptide reads, in one-letter code: Endogenous retrovirus group K member 21 Rec protein (104 aa).

The interval methionine 1–threonine 48 is disordered. The span at alanine 10 to arginine 20 shows a compositional bias: basic residues. The short motif at arginine 13 to arginine 20 is the Nuclear localization signal element. A Nuclear export signal motif is present at residues tryptophan 49 to leucine 58.

Forms homodimers, homotrimers, and homotetramers via a C-terminal domain. Associates with XPO1 and with ZNF145.

The protein localises to the cytoplasm. It is found in the nucleus. It localises to the nucleolus. Retroviral replication requires the nuclear export and translation of unspliced, singly-spliced and multiply-spliced derivatives of the initial genomic transcript. Rec interacts with a highly structured RNA element (RcRE) present in the viral 3'LTR and recruits the cellular nuclear export machinery. This permits export to the cytoplasm of unspliced genomic or incompletely spliced subgenomic viral transcripts. This Homo sapiens (Human) protein is Endogenous retrovirus group K member 21 Rec protein (ERVK-21).